Here is a 177-residue protein sequence, read N- to C-terminus: Cytochrome c oxidase assembly protein CtaG (177 aa).

Over 1–8 (MTQKAKNT) the chain is Cytoplasmic. Residues 9–29 (IYLLILIILSMLCLVYASVPL) form a helical; Signal-anchor for type II membrane protein membrane-spanning segment. Topologically, residues 30–177 (YSIFCKVTGY…TFFKYKETTK (148 aa)) are periplasmic.

Belongs to the COX11/CtaG family.

The protein resides in the cell inner membrane. Its function is as follows. Exerts its effect at some terminal stage of cytochrome c oxidase synthesis, probably by being involved in the insertion of the copper B into subunit I. This is Cytochrome c oxidase assembly protein CtaG from Ehrlichia ruminantium (strain Gardel).